The following is a 1008-amino-acid chain: PWWP domain-containing protein 3 (1008 aa).

Residues 78–122 (VSSLLKLKEDVEEEEEEEEEEEEEEEDGEDEEEEEEEEEEEEEEE) are a coiled coil. Positions 84–124 (LKEDVEEEEEEEEEEEEEEEDGEDEEEEEEEEEEEEEEEHG) are disordered. Over residues 87–122 (DVEEEEEEEEEEEEEEEDGEDEEEEEEEEEEEEEEE) the composition is skewed to acidic residues. The region spanning 127–188 (VGDFVWGKIK…ASQLKPFAES (62 aa)) is the PWWP domain. Disordered stretches follow at residues 307–339 (EYHE…GLQW), 399–606 (ETEP…LGQE), and 668–874 (NHKF…GPGS). The segment covering 321–330 (NNDDDDDDEE) has biased composition (acidic residues). A compositionally biased stretch (basic and acidic residues) spans 399–409 (ETEPADGDVKS). Over residues 473–490 (DDGDDDGSGDKEESEEKE) the composition is skewed to acidic residues. Basic and acidic residues-rich tracts occupy residues 511–522 (RFDDSVVERSTE), 677–687 (SSDKEKEELSE), and 707–725 (QKAE…TDKH). Residues 726-738 (GKMKKERKRKKSE) show a composition bias toward basic residues. 3 stretches are compositionally biased toward basic and acidic residues: residues 739-758 (SKKE…ESTK), 768-787 (SKKQ…ESTK), and 794-818 (NPES…ESTK). 3 short sequence motifs (nuclear localization signal) span residues 786–793 (TKKERKRK), 809–816 (TRKESVES), and 841–848 (EKKKKKKR). The stretch at 804–824 (VEEEETRKESVESTKKERKRK) forms a coiled coil. Residues 842-854 (KKKKKKREGKSKK) are compositionally biased toward basic residues.

The protein belongs to the PDP family. Interacts with DEK3. Binds to LHP1, MSI4/FVE and MSI5. Component of the PRC2 (polycomb repressive complex 2) complex which regulates histone methylation on histone H3K27.

The protein resides in the nucleus. In terms of biological role, together with PDP1, PDP2 and PDP6, interacts with MSI4/FVE and MSI5 to suppress FLC, MAF4 and MAF5 expression by regulating the function of the PRC2 complex and modulating H3K27me3 level, thereby promoting flowering. The chain is PWWP domain-containing protein 3 from Arabidopsis thaliana (Mouse-ear cress).